A 225-amino-acid chain; its full sequence is Heptaprenylglyceryl phosphate synthase (225 aa).

K6 is a sn-glycerol 1-phosphate binding site. Mg(2+) is bound by residues D8 and T34. Sn-glycerol 1-phosphate is bound by residues 153 to 158 (YVEYSG), G183, and 203 to 204 (GN).

It belongs to the GGGP/HepGP synthase family. Group I subfamily. As to quaternary structure, homodimer. Requires Mg(2+) as cofactor.

It carries out the reaction sn-glycerol 1-phosphate + all-trans-heptaprenyl diphosphate = 3-heptaprenyl-sn-glycero-1-phosphate + diphosphate. The protein operates within membrane lipid metabolism; glycerophospholipid metabolism. In terms of biological role, prenyltransferase that catalyzes in vivo the transfer of the heptaprenyl moiety of heptaprenyl pyrophosphate (HepPP; 35 carbon atoms) to the C3 hydroxyl of sn-glycerol-1-phosphate (G1P), producing heptaprenylglyceryl phosphate (HepGP). This reaction is an ether-bond-formation step in the biosynthesis of archaea-type G1P-based membrane lipids found in Bacillales. The protein is Heptaprenylglyceryl phosphate synthase of Listeria innocua serovar 6a (strain ATCC BAA-680 / CLIP 11262).